The primary structure comprises 495 residues: Glutamate--tRNA ligase (495 aa).

The short motif at 14-24 is the 'HIGH' region element; that stretch reads PSPTGYLHIGS. Positions 255 to 259 match the 'KMSKS' region motif; that stretch reads KLSKR. Residue Lys-258 participates in ATP binding.

The protein belongs to the class-I aminoacyl-tRNA synthetase family. Glutamate--tRNA ligase type 1 subfamily. Monomer.

It localises to the cytoplasm. It carries out the reaction tRNA(Glu) + L-glutamate + ATP = L-glutamyl-tRNA(Glu) + AMP + diphosphate. Catalyzes the attachment of glutamate to tRNA(Glu) in a two-step reaction: glutamate is first activated by ATP to form Glu-AMP and then transferred to the acceptor end of tRNA(Glu). In Herpetosiphon aurantiacus (strain ATCC 23779 / DSM 785 / 114-95), this protein is Glutamate--tRNA ligase.